We begin with the raw amino-acid sequence, 272 residues long: NH(3)-dependent NAD(+) synthetase (272 aa).

Glycine 43–serine 50 is a binding site for ATP. Aspartate 49 is a binding site for Mg(2+). Arginine 138 is a deamido-NAD(+) binding site. Threonine 158 lines the ATP pocket. Mg(2+) is bound at residue glutamate 163. Deamido-NAD(+) contacts are provided by lysine 171 and aspartate 178. ATP-binding residues include lysine 187 and threonine 209. Histidine 258 to lysine 259 is a binding site for deamido-NAD(+).

The protein belongs to the NAD synthetase family. Homodimer.

The catalysed reaction is deamido-NAD(+) + NH4(+) + ATP = AMP + diphosphate + NAD(+) + H(+). The protein operates within cofactor biosynthesis; NAD(+) biosynthesis; NAD(+) from deamido-NAD(+) (ammonia route): step 1/1. Catalyzes the ATP-dependent amidation of deamido-NAD to form NAD. Uses ammonia as a nitrogen source. The sequence is that of NH(3)-dependent NAD(+) synthetase from Halalkalibacterium halodurans (strain ATCC BAA-125 / DSM 18197 / FERM 7344 / JCM 9153 / C-125) (Bacillus halodurans).